The following is a 528-amino-acid chain: Tyrosine--tRNA ligase, cytoplasmic (528 aa).

M1 carries the post-translational modification N-acetylmethionine. Residue G2 is modified to N-acetylglycine; in Tyrosine--tRNA ligase, cytoplasmic, N-terminally processed. Position 39 (Y39) interacts with L-tyrosine. Y39 is a binding site for trans-resveratrol. Residues 44-52 (TTGKPHVAY) carry the 'HIGH' region motif. Residues Y166, Q170, D173, and Q188 each coordinate L-tyrosine. Residues Q170 and D173 each coordinate trans-resveratrol. K197 carries the N6-acetyllysine modification. S205 is subject to Phosphoserine. Residue K206 is modified to N6-acetyllysine. A 'KMSKS' region motif is present at residues 222–226 (KMSSS). The Nuclear localization signal motif lies at 242-247 (KKKLKK). The interval 339–363 (AAYPDPSKQKPMAKGPAKNSEPEEV) is disordered. In terms of domain architecture, tRNA-binding spans 364–468 (IPSRLDIRVG…AGSAPGEHVF (105 aa)). The residue at position 386 (S386) is a Phosphoserine. N6-acetyllysine is present on residues K474, K482, and K490.

It belongs to the class-I aminoacyl-tRNA synthetase family. In terms of assembly, homodimer. Interacts (when binding to resveratrol) with PARP1; interaction stimulates the poly-ADP-ribosyltransferase activity of PARP1.

The protein resides in the cytoplasm. Its subcellular location is the nucleus. It carries out the reaction tRNA(Tyr) + L-tyrosine + ATP = L-tyrosyl-tRNA(Tyr) + AMP + diphosphate + H(+). Its activity is regulated as follows. Resveratrol strongly inhibits the tyrosine--tRNA ligase activity. In terms of biological role, tyrosine--tRNA ligase that catalyzes the attachment of tyrosine to tRNA(Tyr) in a two-step reaction: tyrosine is first activated by ATP to form Tyr-AMP and then transferred to the acceptor end of tRNA(Tyr). Also acts as a positive regulator of poly-ADP-ribosylation in the nucleus, independently of its tyrosine--tRNA ligase activity. Activity is switched upon resveratrol-binding: resveratrol strongly inhibits the tyrosine--tRNA ligase activity and promotes relocalization to the nucleus, where YARS1 specifically stimulates the poly-ADP-ribosyltransferase activity of PARP1. The sequence is that of Tyrosine--tRNA ligase, cytoplasmic from Homo sapiens (Human).